The chain runs to 897 residues: Pre-mRNA-splicing factor CWC22 homolog (897 aa).

The segment covering 1–10 (MSSSRSQSPE) has biased composition (polar residues). The segment at 1-155 (MSSSRSQSPE…EKKKKEPLDI (155 aa)) is disordered. 3 stretches are compositionally biased toward basic and acidic residues: residues 36–54 (SSEKSASRSQSPRESREVS), 93–107 (RSKETRESESPEKSP), and 131–155 (RSSERKQSEEPAPLPEKKKKEPLDI). In terms of domain architecture, MIF4G spans 194-382 (KKKIHGLVNR…ETAMQIRKDK (189 aa)). A disordered region spans residues 444 to 472 (NADISDEDGGDELDDEEEGSDVEEAPKKT). Acidic residues predominate over residues 447–466 (ISDEDGGDELDDEEEGSDVE). Positions 485–601 (AFRREVYLTM…DWKILADMKM (117 aa)) constitute an MI domain. Composition is skewed to low complexity over residues 689–710 (LDQLKAESSSDSSSSSDSSDSS) and 720–730 (DSSSDSSSSSE). The disordered stretch occupies residues 689–897 (LDQLKAESSS…VESDDRRRRR (209 aa)). The span at 743-897 (NSEESSKKKE…VESDDRRRRR (155 aa)) shows a compositional bias: basic and acidic residues.

It belongs to the CWC22 family. In terms of tissue distribution, expressed in germ cells, oocytes, and sperm cells.

It is found in the nucleus. The protein localises to the nucleus speckle. In terms of biological role, required for pre-mRNA splicing and for exon-junction complex (EJC) assembly. Hinders EIF4A3 from non-specifically binding RNA and escorts it to the splicing machinery to promote EJC assembly on mature mRNAs. Through its role in EJC assembly, required for nonsense-mediated mRNA decay. Plays a role in the nuclear retention of unspliced mRNAs. Plays a role in sex determination. Required for early embryogenesis and tissue differentiation. This chain is Pre-mRNA-splicing factor CWC22 homolog, found in Caenorhabditis elegans.